The chain runs to 469 residues: 6-phosphofructo-2-kinase/fructose-2,6-bisphosphatase 4 (469 aa).

The 6-phosphofructo-2-kinase stretch occupies residues 1–249 (MASPRELTQN…YYLMNIHVTP (249 aa)). Position 46–54 (46–54 (GLPARGKTY)) interacts with ATP. Residues R79 and R103 each contribute to the beta-D-fructose 6-phosphate site. The active site involves D129. Beta-D-fructose 6-phosphate-binding residues include T131 and R137. C159 is an active-site residue. 168–173 (NIVQVK) serves as a coordination point for ATP. The beta-D-fructose 6-phosphate site is built by K173, R194, and Y198. Residues 250–469 (RSIYLCRHGE…EALVTVPAHQ (220 aa)) form a fructose-2,6-bisphosphatase region. R256 serves as a coordination point for beta-D-fructose 2,6-bisphosphate. H257 acts as the Tele-phosphohistidine intermediate in catalysis. Positions 263, 269, and 306 each coordinate beta-D-fructose 2,6-bisphosphate. E326 serves as the catalytic Proton donor/acceptor. Residues Y337, R351, K355, Y366, Q392, and R396 each contribute to the beta-D-fructose 2,6-bisphosphate site. 348–351 (FALR) is a binding site for ATP. ATP is bound by residues 392–396 (QAVMR) and Y428. T444 carries the post-translational modification Phosphothreonine; by PKC.

The protein in the C-terminal section; belongs to the phosphoglycerate mutase family. In terms of assembly, homodimer.

The enzyme catalyses beta-D-fructose 2,6-bisphosphate + H2O = beta-D-fructose 6-phosphate + phosphate. The catalysed reaction is beta-D-fructose 6-phosphate + ATP = beta-D-fructose 2,6-bisphosphate + ADP + H(+). With respect to regulation, the most important regulatory mechanism of these opposing activities is by phosphorylation and dephosphorylation of the enzyme. Functionally, synthesis and degradation of fructose 2,6-bisphosphate. The sequence is that of 6-phosphofructo-2-kinase/fructose-2,6-bisphosphatase 4 (PFKFB4) from Macaca fascicularis (Crab-eating macaque).